A 739-amino-acid chain; its full sequence is POU domain, class 2, transcription factor 1 (739 aa).

Over residues 1–11 (MNNPSETSKPS) the composition is skewed to polar residues. Disordered regions lie at residues 1–39 (MNNP…GGPI), 67–95 (SLNV…SVQA), 253–277 (TPIQ…EEPS), 353–378 (DSTL…RRKK), and 489–553 (SVTG…SSPL). Positions 81–95 (SQQPSQPSQQPSVQA) are enriched in low complexity. A POU-specific domain is found at 274 to 348 (EEPSDLEELE…LLEKWLNDAE (75 aa)). Residues 353 to 364 (DSTLSSPSALNS) show a composition bias toward low complexity. Positions 375 to 434 (RRKKRTSIETNIRVALEKSFLENQKPTSEEITMIADQLNMEKEVIRVWFCNRRQKEKRIN) form a DNA-binding region, homeobox. Residues 489-552 (SVTGTTETTS…QTTSTPLSSP (64 aa)) are compositionally biased toward low complexity.

It belongs to the POU transcription factor family. Class-2 subfamily. In terms of assembly, interacts with NR3C1, AR and PGR.

The protein resides in the nucleus. Its function is as follows. Transcription factor that binds to the octamer motif (5'-ATTTGCAT-3') and activates the promoters of the genes for some small nuclear RNAs (snRNA) and of genes such as those for histone H2B and immunoglobulins. Modulates transcription transactivation by NR3C1, AR and PGR. This chain is POU domain, class 2, transcription factor 1 (POU2F1), found in Gallus gallus (Chicken).